A 475-amino-acid polypeptide reads, in one-letter code: Ribulose bisphosphate carboxylase large chain (475 aa).

Positions 1–2 are excised as a propeptide; sequence MS. N-acetylproline is present on Pro-3. Position 14 is an N6,N6,N6-trimethyllysine (Lys-14). Substrate contacts are provided by Asn-123 and Thr-173. The active-site Proton acceptor is the Lys-175. Lys-177 contacts substrate. Positions 201, 203, and 204 each coordinate Mg(2+). Lys-201 is subject to N6-carboxylysine. His-294 serves as the catalytic Proton acceptor. The substrate site is built by Arg-295, His-327, and Ser-379.

The protein belongs to the RuBisCO large chain family. Type I subfamily. In terms of assembly, heterohexadecamer of 8 large chains and 8 small chains; disulfide-linked. The disulfide link is formed within the large subunit homodimers. Mg(2+) is required as a cofactor. In terms of processing, the disulfide bond which can form in the large chain dimeric partners within the hexadecamer appears to be associated with oxidative stress and protein turnover.

The protein resides in the plastid. Its subcellular location is the chloroplast. It catalyses the reaction 2 (2R)-3-phosphoglycerate + 2 H(+) = D-ribulose 1,5-bisphosphate + CO2 + H2O. The catalysed reaction is D-ribulose 1,5-bisphosphate + O2 = 2-phosphoglycolate + (2R)-3-phosphoglycerate + 2 H(+). Its function is as follows. RuBisCO catalyzes two reactions: the carboxylation of D-ribulose 1,5-bisphosphate, the primary event in carbon dioxide fixation, as well as the oxidative fragmentation of the pentose substrate in the photorespiration process. Both reactions occur simultaneously and in competition at the same active site. In Eucalyptus globulus subsp. globulus (Tasmanian blue gum), this protein is Ribulose bisphosphate carboxylase large chain.